Consider the following 79-residue polypeptide: MSLHLTLVLSGKNLKIVVESINVVTARSERSSLLDCKRCCKRPNIPHTETVDFVWGFNVETRLIAAETQSDFGRKHPGR.

This is an uncharacterized protein from Dryophytes versicolor (chameleon treefrog).